Reading from the N-terminus, the 122-residue chain is Large ribosomal subunit protein uL14 (122 aa).

It belongs to the universal ribosomal protein uL14 family. Part of the 50S ribosomal subunit. Forms a cluster with proteins L3 and L19. In the 70S ribosome, L14 and L19 interact and together make contacts with the 16S rRNA in bridges B5 and B8.

Binds to 23S rRNA. Forms part of two intersubunit bridges in the 70S ribosome. In Streptococcus uberis (strain ATCC BAA-854 / 0140J), this protein is Large ribosomal subunit protein uL14.